The chain runs to 185 residues: MALHLTLARPYAKAAFADGQKANQLEAWLAVFTAFSKIIKNKEVARQIINPKFSDKEIKTLLFDLIQTIEPESTKQLKDKIDHFLQLLIDEKRLMILPDIALVYQQLLNKYQGIIEASVTYVFPLNDEHRQQIQKQLEKRFNAEVKLKMIKDESLLGGVIIRAGNWVMDGSIKGKLTRLAENLKG.

It belongs to the ATPase delta chain family. As to quaternary structure, F-type ATPases have 2 components, F(1) - the catalytic core - and F(0) - the membrane proton channel. F(1) has five subunits: alpha(3), beta(3), gamma(1), delta(1), epsilon(1). F(0) has three main subunits: a(1), b(2) and c(10-14). The alpha and beta chains form an alternating ring which encloses part of the gamma chain. F(1) is attached to F(0) by a central stalk formed by the gamma and epsilon chains, while a peripheral stalk is formed by the delta and b chains.

Its subcellular location is the cell inner membrane. In terms of biological role, f(1)F(0) ATP synthase produces ATP from ADP in the presence of a proton or sodium gradient. F-type ATPases consist of two structural domains, F(1) containing the extramembraneous catalytic core and F(0) containing the membrane proton channel, linked together by a central stalk and a peripheral stalk. During catalysis, ATP synthesis in the catalytic domain of F(1) is coupled via a rotary mechanism of the central stalk subunits to proton translocation. Its function is as follows. This protein is part of the stalk that links CF(0) to CF(1). It either transmits conformational changes from CF(0) to CF(1) or is implicated in proton conduction. The sequence is that of ATP synthase subunit delta from Coxiella burnetii (strain CbuG_Q212) (Coxiella burnetii (strain Q212)).